The following is a 159-amino-acid chain: uncharacterized protein (159 aa).

The next 2 helical transmembrane spans lie at 17–37 (ALFI…TILV) and 40–60 (LLQF…FKKY).

It localises to the cell membrane. This is an uncharacterized protein from Borreliella burgdorferi (strain ATCC 35210 / DSM 4680 / CIP 102532 / B31) (Borrelia burgdorferi).